The primary structure comprises 444 residues: sn-glycerol-3-phosphate-binding periplasmic protein UgpB (444 aa).

Positions 1–30 (MFNNTIRKTHAIRTAAACVAFALMSAGAQA) are cleaved as a signal peptide. Sn-glycerol 3-phosphate-binding residues include Y72, E96, S151, S277, G314, Y353, and R404.

It belongs to the bacterial solute-binding protein 1 family. As to quaternary structure, the complex is composed of two ATP-binding proteins (UgpC), two transmembrane proteins (UgpA and UgpE) and a solute-binding protein (UgpB).

The protein resides in the periplasm. Its function is as follows. Part of the ABC transporter complex UgpBAEC involved in sn-glycerol-3-phosphate (G3P) import. Binds G3P. This chain is sn-glycerol-3-phosphate-binding periplasmic protein UgpB (ugpB), found in Pectobacterium atrosepticum (strain SCRI 1043 / ATCC BAA-672) (Erwinia carotovora subsp. atroseptica).